The chain runs to 387 residues: MSVIKMTDLDLAGKRVFIRADLNVPVKDGKVTSDARIRASLPTIELALKQGAKVMVTSHLGRPTEGEYNEEFSLLPVVNYLKDKLSNPVRLVKDYLDGVEVAEGELVVLENVRFNKGEKKDDEALSKKYAALCDVFVMDAFGTAHRAQASTHGIGKFADVACAGPLLAEELDALGKALKEPARPMVAIVGGSKVSTKLTVLDSLSKIADQLIVGGGIANTFVAAQGHNVGKSLYEADLVEEAKRLLTTCDIPVPTDVRVATEFSETATATLKSVNDIKDEEQILDLGDVSAQKLADILKNAKTILWNGPVGVFEFPNFRKGTEIVANAIADSDAFSIAGGGDTLAAIDLFGISDKISYISTGGGAFLEFVEGKVLPAVAMLEERAKK.

Substrate contacts are provided by residues 21-23 (DLN), R36, 59-62 (HLGR), R113, and R146. ATP contacts are provided by residues K197, E314, and 340-343 (GGDT).

It belongs to the phosphoglycerate kinase family. As to quaternary structure, monomer.

It is found in the cytoplasm. It carries out the reaction (2R)-3-phosphoglycerate + ATP = (2R)-3-phospho-glyceroyl phosphate + ADP. Its pathway is carbohydrate degradation; glycolysis; pyruvate from D-glyceraldehyde 3-phosphate: step 2/5. The polypeptide is Phosphoglycerate kinase (Enterobacter sp. (strain 638)).